The primary structure comprises 580 residues: Bifunctional lycopene cyclase/phytoene synthase (580 aa).

3 helical membrane-spanning segments follow: residues 3 to 23, 35 to 55, and 65 to 85; these read WEYA…LAAV, KLVF…SYLI, and GVVV…FFVI. N-linked (GlcNAc...) asparagine glycosylation is present at asparagine 89. Helical transmembrane passes span 116–136, 139–159, 171–191, and 214–234; these read IAGQ…VSSG, GMYM…LWSI, NTAL…TFAL, and IEEA…LIAC.

It in the N-terminal section; belongs to the lycopene beta-cyclase family. The protein in the C-terminal section; belongs to the phytoene/squalene synthase family.

It localises to the membrane. The catalysed reaction is all-trans-lycopene = gamma-carotene. It catalyses the reaction gamma-carotene = all-trans-beta-carotene. The enzyme catalyses 2 (2E,6E,10E)-geranylgeranyl diphosphate = 15-cis-phytoene + 2 diphosphate. Its pathway is carotenoid biosynthesis; beta-carotene biosynthesis. It functions in the pathway carotenoid biosynthesis; phytoene biosynthesis; all-trans-phytoene from geranylgeranyl diphosphate: step 1/1. Its function is as follows. Bifunctional enzyme; part of the car gene cluster that mediates the biosynthesis of neurosporaxanthin, a carboxylic apocarotenoid acting as an essential protective pigments and leading to orange pigmentation. CarAR catalyzes the first step of the pathway by converting geranylgeranyl diphosphate to phytoene, as well as the later cyclization step that transforms the carB product lycopene into gamma-carotene. CarAR also converts part of gamma-carotene into beta-carotene. Neurosporaxanthin is synthesized from geranyl-geranyl pyrophosphate (GGPP) through several enzymatic activities. Phytoene synthase activity performed by the bifunctional enzyme carAR first produces phytoene from geranyl-geranyl pyrophosphate (GGPP). The phytoene dehydrogenase carB then introduces 4 desaturations to lead to lycopene which is substrate of the carotene cyclase activity of carAR that leads to the production of gamma-carotene. CarB then performs a 5th desaturation reaction to yield torulene. Torulene is the substrate of the dioxidase carT that breaks the molecule, removing five carbon atoms to yield beta-apo-4'-carotenal, whereas the aldehyde dehydrogenase carD mediates the last step by converting beta-apo-4'-carotenal into neurosporaxanthin. The chain is Bifunctional lycopene cyclase/phytoene synthase from Gibberella fujikuroi (strain CBS 195.34 / IMI 58289 / NRRL A-6831) (Bakanae and foot rot disease fungus).